The following is a 558-amino-acid chain: CTP synthase (558 aa).

Residues Met1–Leu270 are amidoligase domain. Ser13 is a binding site for CTP. Ser13 is a binding site for UTP. ATP is bound by residues Ser14–Ile19 and Asp71. The Mg(2+) site is built by Asp71 and Glu144. CTP is bound by residues Asp151–Glu153, Lys191–Gln196, and Lys227. UTP-binding positions include Lys191–Gln196 and Lys227. The Glutamine amidotransferase type-1 domain maps to Thr295–Lys547. Gly356 serves as a coordination point for L-glutamine. Residue Cys383 is the Nucleophile; for glutamine hydrolysis of the active site. L-glutamine contacts are provided by residues Leu384 to Gln387, Glu407, and Arg473. Catalysis depends on residues His520 and Glu522.

The protein belongs to the CTP synthase family. In terms of assembly, homotetramer.

It carries out the reaction UTP + L-glutamine + ATP + H2O = CTP + L-glutamate + ADP + phosphate + 2 H(+). The enzyme catalyses L-glutamine + H2O = L-glutamate + NH4(+). It catalyses the reaction UTP + NH4(+) + ATP = CTP + ADP + phosphate + 2 H(+). It functions in the pathway pyrimidine metabolism; CTP biosynthesis via de novo pathway; CTP from UDP: step 2/2. With respect to regulation, allosterically activated by GTP, when glutamine is the substrate; GTP has no effect on the reaction when ammonia is the substrate. The allosteric effector GTP functions by stabilizing the protein conformation that binds the tetrahedral intermediate(s) formed during glutamine hydrolysis. Inhibited by the product CTP, via allosteric rather than competitive inhibition. Catalyzes the ATP-dependent amination of UTP to CTP with either L-glutamine or ammonia as the source of nitrogen. Regulates intracellular CTP levels through interactions with the four ribonucleotide triphosphates. The protein is CTP synthase of Polynucleobacter necessarius subsp. necessarius (strain STIR1).